A 462-amino-acid chain; its full sequence is MHTSVFKEPKNNDAVLSNHCNASVAFLHLGCEKNLVDTEHMMGLLASEGYGVSSNTDDAEVVVVNTCSFIEQAREESVRALVGLADQGKEIIIAGCLAQHFKSELLESIPEAKAIVGTGDYQNIIEVLQRVRQGERVNQVSENPKFVGDENLPRYRTTGRFVSYLKVAEGCNYRCAFCIIPTLRGNQRSRSVQSIVNEANQLAKEGIQELILISQITTNYGMDLYGRPYLADLLRALSHVDIPWIRIHYAYPTGLTPEVVLAYKEVPNVLPYFDLPLQHSHPDVLRAMNRPWQSDVSSALLNRIKEQLPEAVMRTTLIVGFPGETKAQFDHLCAFVENQKFDHVGVFAFSREEGTEAAKLPNQVPFEIAQARKDKLVAIQQPISAAKNQALIGQTVDVLIEREDLATGELIGRSARFAPEVDGEVRLRPSQVLFNDLHGKIVPALITGSELYDLTGEINHLN.

The MTTase N-terminal domain occupies 22-133; that stretch reads ASVAFLHLGC…IIEVLQRVRQ (112 aa). The [4Fe-4S] cluster site is built by cysteine 31, cysteine 67, cysteine 96, cysteine 171, cysteine 175, and cysteine 178. The Radical SAM core domain maps to 157–386; the sequence is TTGRFVSYLK…VAIQQPISAA (230 aa). The TRAM domain occupies 389 to 460; the sequence is QALIGQTVDV…LYDLTGEINH (72 aa).

This sequence belongs to the methylthiotransferase family. RimO subfamily. The cofactor is [4Fe-4S] cluster.

The protein localises to the cytoplasm. The enzyme catalyses L-aspartate(89)-[ribosomal protein uS12]-hydrogen + (sulfur carrier)-SH + AH2 + 2 S-adenosyl-L-methionine = 3-methylsulfanyl-L-aspartate(89)-[ribosomal protein uS12]-hydrogen + (sulfur carrier)-H + 5'-deoxyadenosine + L-methionine + A + S-adenosyl-L-homocysteine + 2 H(+). Catalyzes the methylthiolation of an aspartic acid residue of ribosomal protein uS12. The protein is Ribosomal protein uS12 methylthiotransferase RimO of Prochlorococcus marinus (strain MIT 9211).